Consider the following 186-residue polypeptide: Elongation factor P (186 aa).

The protein belongs to the elongation factor P family.

It localises to the cytoplasm. It participates in protein biosynthesis; polypeptide chain elongation. Its function is as follows. Involved in peptide bond synthesis. Stimulates efficient translation and peptide-bond synthesis on native or reconstituted 70S ribosomes in vitro. Probably functions indirectly by altering the affinity of the ribosome for aminoacyl-tRNA, thus increasing their reactivity as acceptors for peptidyl transferase. The protein is Elongation factor P of Elusimicrobium minutum (strain Pei191).